The chain runs to 495 residues: Probable cytosol aminopeptidase (495 aa).

Positions 261 and 266 each coordinate Mn(2+). Lys273 is an active-site residue. Asp284, Asp343, and Glu345 together coordinate Mn(2+). The active site involves Arg347.

The protein belongs to the peptidase M17 family. Mn(2+) is required as a cofactor.

The protein resides in the cytoplasm. It catalyses the reaction Release of an N-terminal amino acid, Xaa-|-Yaa-, in which Xaa is preferably Leu, but may be other amino acids including Pro although not Arg or Lys, and Yaa may be Pro. Amino acid amides and methyl esters are also readily hydrolyzed, but rates on arylamides are exceedingly low.. It carries out the reaction Release of an N-terminal amino acid, preferentially leucine, but not glutamic or aspartic acids.. Presumably involved in the processing and regular turnover of intracellular proteins. Catalyzes the removal of unsubstituted N-terminal amino acids from various peptides. The polypeptide is Probable cytosol aminopeptidase (Chelativorans sp. (strain BNC1)).